Here is a 143-residue protein sequence, read N- to C-terminus: UPF0251 protein Rru_A1194 (143 aa).

A disordered region spans residues 100–143 (LDGSACPNRRQRRGPCARRGAAGALARQTGDEPPSSPTDNEKDD). A compositionally biased stretch (low complexity) spans 116 to 126 (ARRGAAGALAR).

This sequence belongs to the UPF0251 family.

The protein is UPF0251 protein Rru_A1194 of Rhodospirillum rubrum (strain ATCC 11170 / ATH 1.1.1 / DSM 467 / LMG 4362 / NCIMB 8255 / S1).